The primary structure comprises 66 residues: Pteroicidin-alpha (66 aa).

A signal peptide spans 1-22 (MKCIALFLVLSMVVLMAEPGEA). Position 43 is an arginine amide; partial (arginine 43). Positions 44–66 (GKNRDMAEQQELERAFDRERAFA) are excised as a propeptide.

It belongs to the pleurocidin family. Post-translationally, this peptide exists in N-terminally amidated and non-amidated forms. The amidated form is more active and has a greater alpha-helix content than the non-amidated form. Expressed in gill, skin, intestine, spleen, anterior kidney, and blood cells.

The protein localises to the secreted. Its function is as follows. The amidated peptide is bactericidal on human pathogens like S.aureus or E.coli, as well as on the fish pathogen A.salmonicida. May also be active against a variety of fungi. It can kill bacteria in less than 30 minutes (S.aureus) and 120 minutes (V.vulnificus). It induces hemolysis of erythrocytes from human and fishes (sea bass and lesser-spotted dogfish). The non-amidated peptide only inhibits growth of human pathogens like S.aureus or E.coli, and the fish pathogen A.salmonicida. Induces hemolysis of erythrocytes from human and fishes (sea bass and lesser-spotted dogfish). The chain is Pteroicidin-alpha from Pterois volitans (Red lionfish).